Consider the following 582-residue polypeptide: Hemagglutinin-neuraminidase (582 aa).

Residues 1–34 (MEPSKLFTMSDNATFAPGPVVNAADKKTFRTCFR) lie on the Intravirion side of the membrane. A helical membrane pass occupies residues 35–55 (ILVLSVQAVTLILVIVTLGEL). Over 56–582 (VRMINDQGLS…LPVLTRLTIT (527 aa)) the chain is Virion surface. Intrachain disulfides connect Cys178–Cys202, Cys192–Cys253, and Cys244–Cys257. N-linked (GlcNAc...) asparagine; by host glycosylation is found at Asn284 and Asn329. 3 cysteine pairs are disulfide-bonded: Cys350-Cys471, Cys382-Cys392, and Cys465-Cys475. 2 N-linked (GlcNAc...) asparagine; by host glycosylation sites follow: Asn400 and Asn448. Asn507 is a glycosylation site (N-linked (GlcNAc...) asparagine; by host). Cys545 and Cys556 are disulfide-bonded.

Belongs to the paramyxoviruses hemagglutinin-neuraminidase family. Homotetramer; composed of disulfide-linked homodimers. Interacts with F protein trimer.

The protein localises to the virion membrane. It localises to the host cell membrane. The enzyme catalyses Hydrolysis of alpha-(2-&gt;3)-, alpha-(2-&gt;6)-, alpha-(2-&gt;8)- glycosidic linkages of terminal sialic acid residues in oligosaccharides, glycoproteins, glycolipids, colominic acid and synthetic substrates.. Functionally, attaches the virus to alpha-2,3-linked sialic acid-containing cell receptors and thereby initiating infection. Binding of HN protein to the receptor induces a conformational change that allows the F protein to trigger virion/cell membranes fusion. Binds to the glycan motifs sialyl Lewis (SLe) and GM2 ganglioside (GM2-glycan). Its function is as follows. Neuraminidase activity ensures the efficient spread of the virus by dissociating the mature virions from the neuraminic acid containing glycoproteins. The sequence is that of Hemagglutinin-neuraminidase from Mumps orthorubulavirus (MuV).